A 166-amino-acid chain; its full sequence is Ureidoglycolate lyase (166 aa).

It belongs to the ureidoglycolate lyase family. In terms of assembly, homodimer. Ni(2+) is required as a cofactor.

It carries out the reaction (S)-ureidoglycolate = urea + glyoxylate. Its pathway is nitrogen metabolism; (S)-allantoin degradation. Its function is as follows. Catalyzes the catabolism of the allantoin degradation intermediate (S)-ureidoglycolate, generating urea and glyoxylate. Involved in the utilization of allantoin as nitrogen source. In Rhizobium leguminosarum bv. trifolii (strain WSM2304), this protein is Ureidoglycolate lyase.